The chain runs to 453 residues: Tubulin beta-2 chain (453 aa).

The GTP site is built by Gln-11, Glu-71, Ser-140, Gly-144, Thr-145, Gly-146, Asn-206, and Asn-228. Glu-71 serves as a coordination point for Mg(2+).

The protein belongs to the tubulin family. Dimer of alpha and beta chains. A typical microtubule is a hollow water-filled tube with an outer diameter of 25 nm and an inner diameter of 15 nM. Alpha-beta heterodimers associate head-to-tail to form protofilaments running lengthwise along the microtubule wall with the beta-tubulin subunit facing the microtubule plus end conferring a structural polarity. Microtubules usually have 13 protofilaments but different protofilament numbers can be found in some organisms and specialized cells. The cofactor is Mg(2+).

It localises to the cytoplasm. The protein localises to the cytoskeleton. Functionally, tubulin is the major constituent of microtubules, a cylinder consisting of laterally associated linear protofilaments composed of alpha- and beta-tubulin heterodimers. Microtubules grow by the addition of GTP-tubulin dimers to the microtubule end, where a stabilizing cap forms. Below the cap, tubulin dimers are in GDP-bound state, owing to GTPase activity of alpha-tubulin. The chain is Tubulin beta-2 chain from Geotrichum candidum (Oospora lactis).